A 96-amino-acid polypeptide reads, in one-letter code: MAFNTITFLQWAVFVAILFNMNLHSASAGSKGSSAQQSSHDSIKAEFCETNCTMKTGGKWTQCHGGCFCVHVGNETVGRCIKLDGDYDYPSSKHEE.

The signal sequence occupies residues 1 to 28 (MAFNTITFLQWAVFVAILFNMNLHSASA). 3 disulfide bridges follow: Cys48-Cys67, Cys52-Cys69, and Cys63-Cys80. N-linked (GlcNAc...) asparagine glycosylation is present at Asn51. Residue Asn74 is glycosylated (N-linked (GlcNAc...) asparagine).

It is found in the secreted. Functionally, salivary chemokine-binding protein which binds to host chemokines CXCL1, CXCL2, CXCL3, CXCL5, CXCL6, CXCL11 and CXCL13. In Ixodes ricinus (Common tick), this protein is Evasin P1078.